The primary structure comprises 220 residues: Glutathione S-transferase 2 (220 aa).

In terms of domain architecture, GST N-terminal spans 2–88; that stretch reads VVTLGYWDIR…YIARKHNMCG (87 aa). Residues 7 to 8, 43 to 46, lysine 50, 59 to 60, and 72 to 73 contribute to the glutathione site; these read YW, PSDW, NL, and QS. One can recognise a GST C-terminal domain in the interval 90–208; the sequence is TEVEKQRVDV…RSGRFMKAPI (119 aa). Tyrosine 116 provides a ligand contact to substrate.

It belongs to the GST superfamily. Mu family. Homodimer.

It localises to the cytoplasm. The enzyme catalyses RX + glutathione = an S-substituted glutathione + a halide anion + H(+). Functionally, conjugation of reduced glutathione to a wide number of exogenous and endogenous hydrophobic electrophiles. Participates in the formation of novel hepoxilin regioisomers. In Gallus gallus (Chicken), this protein is Glutathione S-transferase 2 (GSTM2).